We begin with the raw amino-acid sequence, 211 residues long: Probable nicotinate-nucleotide adenylyltransferase (211 aa).

Belongs to the NadD family.

It catalyses the reaction nicotinate beta-D-ribonucleotide + ATP + H(+) = deamido-NAD(+) + diphosphate. The protein operates within cofactor biosynthesis; NAD(+) biosynthesis; deamido-NAD(+) from nicotinate D-ribonucleotide: step 1/1. In terms of biological role, catalyzes the reversible adenylation of nicotinate mononucleotide (NaMN) to nicotinic acid adenine dinucleotide (NaAD). The chain is Probable nicotinate-nucleotide adenylyltransferase from Corynebacterium kroppenstedtii (strain DSM 44385 / JCM 11950 / CIP 105744 / CCUG 35717).